The following is a 126-amino-acid chain: Holo-[acyl-carrier-protein] synthase (126 aa).

Mg(2+) is bound by residues Asp-9 and Glu-58.

It belongs to the P-Pant transferase superfamily. AcpS family. The cofactor is Mg(2+).

It is found in the cytoplasm. The catalysed reaction is apo-[ACP] + CoA = holo-[ACP] + adenosine 3',5'-bisphosphate + H(+). Functionally, transfers the 4'-phosphopantetheine moiety from coenzyme A to a Ser of acyl-carrier-protein. In Vibrio vulnificus (strain YJ016), this protein is Holo-[acyl-carrier-protein] synthase.